Here is a 750-residue protein sequence, read N- to C-terminus: Methylmalonyl-CoA mutase, mitochondrial (750 aa).

The transit peptide at 1 to 32 (MLRAKNQLFLLSPHYLKQVKESSGSRLIQQRL) directs the protein to the mitochondrion. Gln-50 serves as a coordination point for malonyl-CoA. Lys-89 is modified (N6-acetyllysine). Residues 96 to 99 (YPTM) and 106 to 110 (TIRQY) each bind malonyl-CoA. The residue at position 212 (Lys-212) is an N6-acetyllysine. Malonyl-CoA-binding positions include 216 to 218 (TIQ), Arg-228, Lys-255, His-265, and 304 to 306 (RLS). An N6-acetyllysine modification is found at Lys-335. Position 343 is an N6-succinyllysine (Lys-343). Ser-481 carries the post-translational modification Phosphoserine. Lys-595 carries the N6-succinyllysine modification. An N6-acetyllysine modification is found at Lys-602. The B12-binding domain occupies 614–746 (RPRLLVAKMG…DDIEKCLEKK (133 aa)). His-627 provides a ligand contact to adenosylcob(III)alamin.

This sequence belongs to the methylmalonyl-CoA mutase family. Homodimer. Interacts (the apoenzyme form) with MMAA; the interaction is GTP dependent. Adenosylcob(III)alamin serves as cofactor.

Its subcellular location is the mitochondrion matrix. It localises to the mitochondrion. It is found in the cytoplasm. The enzyme catalyses (R)-methylmalonyl-CoA = succinyl-CoA. Inhibited by itaconyl-CoA, a metabolite that inactivates the coenzyme B12 cofactor. Its function is as follows. Catalyzes the reversible isomerization of methylmalonyl-CoA (MMCoA) (generated from branched-chain amino acid metabolism and degradation of dietary odd chain fatty acids and cholesterol) to succinyl-CoA (3-carboxypropionyl-CoA), a key intermediate of the tricarboxylic acid cycle. In Pongo abelii (Sumatran orangutan), this protein is Methylmalonyl-CoA mutase, mitochondrial (MMUT).